A 64-amino-acid chain; its full sequence is Large ribosomal subunit protein eL37 (64 aa).

Zn(2+) contacts are provided by Cys20, Cys23, Cys35, and Cys38. The segment at 20–38 (CRRCGRRAFHVRKKVCAAC) adopts a C4-type zinc-finger fold.

It belongs to the eukaryotic ribosomal protein eL37 family. It depends on Zn(2+) as a cofactor.

Its function is as follows. Binds to the 23S rRNA. The protein is Large ribosomal subunit protein eL37 of Methanococcus maripaludis (strain DSM 14266 / JCM 13030 / NBRC 101832 / S2 / LL).